A 343-amino-acid polypeptide reads, in one-letter code: Dihydroorotase (343 aa).

2 residues coordinate Zn(2+): His14 and His16. Substrate is bound by residues His16–Arg18 and Asn42. Residues Lys99, His136, and His174 each contribute to the Zn(2+) site. Lys99 is modified (N6-carboxylysine). Position 136 (His136) interacts with substrate. Substrate is bound at residue Leu219. Asp247 is a binding site for Zn(2+). The active site involves Asp247. His251 and Ala263 together coordinate substrate.

This sequence belongs to the metallo-dependent hydrolases superfamily. DHOase family. Class II DHOase subfamily. In terms of assembly, homodimer. The cofactor is Zn(2+).

The enzyme catalyses (S)-dihydroorotate + H2O = N-carbamoyl-L-aspartate + H(+). Its pathway is pyrimidine metabolism; UMP biosynthesis via de novo pathway; (S)-dihydroorotate from bicarbonate: step 3/3. Functionally, catalyzes the reversible cyclization of carbamoyl aspartate to dihydroorotate. The sequence is that of Dihydroorotase from Variovorax paradoxus (strain S110).